The primary structure comprises 1727 residues: MSSGGLEDDIQLVHEFLDVSFEDIKPLVSVNGFAVFISAIKTKVKDINALKDQLVLQEVNHEHKENVLTKKINFLEQQLQSSNNQAEESRNLISVLRNENESLKTNLENQNKRFDALTTENQSLRRANSELQEQSKIASEQLSIAKDQIEALQNENSHLGEQVQSAHQALSDIEERKKQHMFASSSSRVKEEILVQEKSALVSDLASLQSDHSKVCEKLEVSSRQVQDLEKKLAGLAQQNTELNEKIQLFEQKRSNYSSDGNISKILETDPTSIKELEEEVETQKRLTALWESKSSELQSEVAALQEKLTSQQSLYNNVTEELNNNKQQLLISENSLRELQEKYDSVVSELQVVKENKNTSVSAGVGLFSPLAQKLSAVQNPEFSFTKVYSDNMKLQQKVSSLKLQLDRLTNKFSSFCEQVKQRIPVVKQQRSEIVRNNIYMNFLSESLETSNNNLTKVQAELLSTKMRQEACYLQLTASRTQCSDLSREVICLMAELDHLNETKSRNVPATVQVALDEYAQNPSTASETLVNKELANFSSIKEAVSKTLELREKVRALECDVEIQKQTVQYQISNAVKENSNTLSEQIKNLESELNSSKIKNESLLNERNLLKEMLATSRSSILSHNSSAGNIDDKMKSIDESTRELEKNYEVYRNEMTAIQESLSKRNQDLLSEMEAIRKELENSKYQQQLSTDRLTNANNDVEAFKKEAKELRSINQNLQDIISRQDQRASKFAEELLHVNSLAERLKGELNASKGEKDLRKRTQERLISENDKLLAERERLMSLVSDLQTFLNQQQLSDAARKVKFESEKESLSLSLQKLKESNEKMSNDLHSLQKSLEKSGIEYSSRIKTLMLEKQSLSEDNRKLLDNQQMMEIKLQELNGVIELEKQRFSTLEAKFTQQKNTSYSEREALLESSLSDLQSKHTSLESQYNYSLRNIEQLQAASKLAEEMVERVKTEYDEYRLQTSESLEKNHLKITSLEQRIVILQDEIASSSLRCENITKDSETRVALLLEENKHLNNELSSHRNAEKQHLEKENDYKQQLLLVTEDLRKTREDYEKELLRHADARSTLQKLREDYTKALEQVEDLNKEIALKAGINESQPFPISEKEDPLRQEVYVLKKQNAMLLTQLQSSNLNFAEITSPSPDLDSVMKLGLSDLQNHVKRISKEMEIISCQRQLLFLENKKLKRTVESSNRVIADLQRGITEKDVSSTSESVGERSNYLNMVALLNESNKSLRENLERNEEVITELREKIETLKTDLANFRLNKEQLESQLQTEKAAVKKLENSNEEYKRHNQEILLSLNSSTSTSSDASRLKNELVSKENLIEELNQEIGHLKSELETVKSKSEDLENERAQNQSKIEQLELKNTKLAAAWRTKYEQVVNKSLEKHNQIRQQLSQKTSELEAKVAECHQLNEQLNKPSATPTATTQSEPSTVSLEEFNSTKEELSSTQRKLSEIMDILNTTKEELEKVRQNSNKSEGTSKDTEIPNEEEMERKKVMQQEVLRLRSRIAKELQKNELLRKQNQVLQDQVKALQETVVSSEEAESASVHADTKDLENLKKTEEMLSVTFQVIFNESISDFSTSTADFTTFVQKEWEKRREILQKDVEEQVAQSHQKQLDNIRKELEMRNKLKLSMLEKNLARVRAELEQSKKKDSPAILSLEASKNTDSNKSNSEVPAAQVKEKKLIAKTHSVDTNSPPKRSSSDAGMDVSNDVKKAK.

7 coiled-coil regions span residues 57–361, 443–463, 542–740, 804–1106, 1223–1427, 1497–1555, and 1601–1664; these read QEVN…KNTS, NFLSESLETSNNNLTKVQAEL, IKEA…AEEL, AARK…INES, GERS…QLNK, NEEE…AESA, and QKEW…KKDS. Over residues 1423-1448 the composition is skewed to polar residues; sequence EQLNKPSATPTATTQSEPSTVSLEEF. Disordered stretches follow at residues 1423–1459, 1477–1500, and 1656–1727; these read EQLNKPSATPTATTQSEPSTVSLEEFNSTKEELSSTQ, EKVRQNSNKSEGTSKDTEIPNEEE, and LEQS…KKAK. 2 stretches are compositionally biased toward polar residues: residues 1672–1684 and 1702–1714; these read ASKNTDSNKSNSE and VDTNSPPKRSSSD. Phosphoserine is present on S1706.

The protein localises to the nucleus. The protein resides in the nuclear pore complex. It localises to the nucleus envelope. Functionally, maintains the proteasome and its anchor cut8 at the nucleus envelope and is required for kinetochore component proteostasis. Proper kinetochore stoichiometry ensures the correct attachment of kinetochores to spindle microtubules during cytokinesis. Required for the localization of spindle assembly checkpoint (SAC) protein mad2 and bub1 to the nucleus envelope during interphase, but not their localization during mitosis. The protein is Nucleoporin alm1 of Schizosaccharomyces pombe (strain 972 / ATCC 24843) (Fission yeast).